Here is a 1496-residue protein sequence, read N- to C-terminus: DENN domain-containing protein 4B (1496 aa).

The region spanning Ala-44 to Leu-203 is the MABP domain. The uDENN domain maps to Val-195 to Pro-369. One can recognise a cDENN domain in the interval Pro-390–Thr-526. Residues Leu-528–Ala-644 enclose the dDENN domain. Residues Gln-720–Gln-744 are disordered. Positions Pro-729–Pro-739 are enriched in low complexity. PPR repeat units lie at residues Trp-775–Pro-811 and Asp-812–Pro-846. Disordered regions lie at residues Leu-891 to Ala-970, Val-995 to Arg-1055, Pro-1067 to Trp-1119, and Ser-1205 to Gly-1227. Low complexity predominate over residues Gln-896–Gln-912. Polar residues-rich tracts occupy residues Val-913–Ala-924 and Arg-935–Ala-944. The residue at position 953 (Ser-953) is a Phosphoserine. Positions Arg-1075–Arg-1090 are enriched in pro residues. Residue Ser-1092 is modified to Phosphoserine. Residues Gly-1105–Trp-1119 are compositionally biased toward low complexity.

Its subcellular location is the golgi apparatus. Guanine nucleotide exchange factor (GEF) which may activate RAB10. Promotes the exchange of GDP to GTP, converting inactive GDP-bound Rab proteins into their active GTP-bound form. This is DENN domain-containing protein 4B (DENND4B) from Homo sapiens (Human).